The sequence spans 317 residues: Probable pathogenesis-related protein CaO19.6200 (317 aa).

The first 23 residues, 1–23 (MKFLQSFPVILAVFSFAANLVSS), serve as a signal peptide directing secretion. Disordered regions lie at residues 52-116 (RLET…TTVT) and 155-179 (PSAP…DSQL). The segment covering 58-76 (PTSTTTTIVIPSSKPSSPE) has biased composition (low complexity). Composition is skewed to polar residues over residues 84–116 (QPMF…TTVT) and 168–179 (ENNSGTNDDSQL). N-linked (GlcNAc...) asparagine glycosylation occurs at Asn-169. The region spanning 187 to 297 (LEAHNIKRAS…GWGLYIICNY (111 aa)) is the SCP domain.

The protein belongs to the CRISP family.

Its subcellular location is the secreted. Secreted protein that acts as a virulence factor during infections. The polypeptide is Probable pathogenesis-related protein CaO19.6200 (Candida albicans (strain SC5314 / ATCC MYA-2876) (Yeast)).